Consider the following 529-residue polypeptide: Peptide chain release factor 3 (529 aa).

A tr-type G domain is found at N11–K280. GTP is bound by residues S20–T27, D88–H92, and N142–D145.

It belongs to the TRAFAC class translation factor GTPase superfamily. Classic translation factor GTPase family. PrfC subfamily.

Its subcellular location is the cytoplasm. Its function is as follows. Increases the formation of ribosomal termination complexes and stimulates activities of RF-1 and RF-2. It binds guanine nucleotides and has strong preference for UGA stop codons. It may interact directly with the ribosome. The stimulation of RF-1 and RF-2 is significantly reduced by GTP and GDP, but not by GMP. This chain is Peptide chain release factor 3, found in Acinetobacter baylyi (strain ATCC 33305 / BD413 / ADP1).